Here is a 198-residue protein sequence, read N- to C-terminus: ATP-dependent Clp protease proteolytic subunit (198 aa).

Ser-98 acts as the Nucleophile in catalysis. His-123 is an active-site residue.

This sequence belongs to the peptidase S14 family. In terms of assembly, fourteen ClpP subunits assemble into 2 heptameric rings which stack back to back to give a disk-like structure with a central cavity, resembling the structure of eukaryotic proteasomes.

The protein localises to the cytoplasm. It catalyses the reaction Hydrolysis of proteins to small peptides in the presence of ATP and magnesium. alpha-casein is the usual test substrate. In the absence of ATP, only oligopeptides shorter than five residues are hydrolyzed (such as succinyl-Leu-Tyr-|-NHMec, and Leu-Tyr-Leu-|-Tyr-Trp, in which cleavage of the -Tyr-|-Leu- and -Tyr-|-Trp bonds also occurs).. Cleaves peptides in various proteins in a process that requires ATP hydrolysis. Has a chymotrypsin-like activity. Plays a major role in the degradation of misfolded proteins. The polypeptide is ATP-dependent Clp protease proteolytic subunit (Listeria innocua serovar 6a (strain ATCC BAA-680 / CLIP 11262)).